The following is a 292-amino-acid chain: Shikimate dehydrogenase (NADP(+)) (292 aa).

Residues 25-27 (SKS) and T72 each bind shikimate. K76 acts as the Proton acceptor in catalysis. Shikimate contacts are provided by N97 and D113. NADP(+)-binding positions include 137 to 141 (GAGGA), 161 to 166 (NRTQSK), and M230. Y232 provides a ligand contact to shikimate. Residue G254 coordinates NADP(+).

The protein belongs to the shikimate dehydrogenase family. Homodimer.

The enzyme catalyses shikimate + NADP(+) = 3-dehydroshikimate + NADPH + H(+). It participates in metabolic intermediate biosynthesis; chorismate biosynthesis; chorismate from D-erythrose 4-phosphate and phosphoenolpyruvate: step 4/7. Involved in the biosynthesis of the chorismate, which leads to the biosynthesis of aromatic amino acids. Catalyzes the reversible NADPH linked reduction of 3-dehydroshikimate (DHSA) to yield shikimate (SA). This Shewanella sp. (strain MR-4) protein is Shikimate dehydrogenase (NADP(+)).